The primary structure comprises 158 residues: Endoribonuclease YbeY (158 aa).

Residues H119, H123, and D129 each coordinate Zn(2+).

It belongs to the endoribonuclease YbeY family. The cofactor is Zn(2+).

Its subcellular location is the cytoplasm. Single strand-specific metallo-endoribonuclease involved in late-stage 70S ribosome quality control and in maturation of the 3' terminus of the 16S rRNA. This chain is Endoribonuclease YbeY, found in Chlamydia pneumoniae (Chlamydophila pneumoniae).